We begin with the raw amino-acid sequence, 218 residues long: Small ribosomal subunit protein uS4 (218 aa).

The region spanning 111 to 175 (RRLQTQVLRL…SPLKNESHPE (65 aa)) is the S4 RNA-binding domain. The disordered stretch occupies residues 192 to 218 (KAAAEAKQAREKPPERGGGRRKRGGRR). Residues 198–209 (KQAREKPPERGG) show a composition bias toward basic and acidic residues.

The protein belongs to the universal ribosomal protein uS4 family. In terms of assembly, part of the 30S ribosomal subunit. Contacts protein S5. The interaction surface between S4 and S5 is involved in control of translational fidelity.

In terms of biological role, one of the primary rRNA binding proteins, it binds directly to 16S rRNA where it nucleates assembly of the body of the 30S subunit. Functionally, with S5 and S12 plays an important role in translational accuracy. The chain is Small ribosomal subunit protein uS4 from Methanosarcina acetivorans (strain ATCC 35395 / DSM 2834 / JCM 12185 / C2A).